We begin with the raw amino-acid sequence, 86 residues long: Defensin-like protein 259 (86 aa).

The signal sequence occupies residues 1–25; sequence MKNASLKLPLLIFILVITSNLGAEA. 3 disulfides stabilise this stretch: C60–C76, C66–C83, and C70–C85.

The protein belongs to the DEFL family.

It is found in the secreted. The protein is Defensin-like protein 259 of Arabidopsis thaliana (Mouse-ear cress).